A 258-amino-acid polypeptide reads, in one-letter code: Imidazole glycerol phosphate synthase subunit HisF (258 aa).

Residues Asp12 and Asp131 contribute to the active site.

It belongs to the HisA/HisF family. In terms of assembly, heterodimer of HisH and HisF.

It localises to the cytoplasm. The enzyme catalyses 5-[(5-phospho-1-deoxy-D-ribulos-1-ylimino)methylamino]-1-(5-phospho-beta-D-ribosyl)imidazole-4-carboxamide + L-glutamine = D-erythro-1-(imidazol-4-yl)glycerol 3-phosphate + 5-amino-1-(5-phospho-beta-D-ribosyl)imidazole-4-carboxamide + L-glutamate + H(+). Its pathway is amino-acid biosynthesis; L-histidine biosynthesis; L-histidine from 5-phospho-alpha-D-ribose 1-diphosphate: step 5/9. Its function is as follows. IGPS catalyzes the conversion of PRFAR and glutamine to IGP, AICAR and glutamate. The HisF subunit catalyzes the cyclization activity that produces IGP and AICAR from PRFAR using the ammonia provided by the HisH subunit. The sequence is that of Imidazole glycerol phosphate synthase subunit HisF from Sinorhizobium medicae (strain WSM419) (Ensifer medicae).